Here is a 622-residue protein sequence, read N- to C-terminus: Membrane protein insertase YidC (622 aa).

The helical transmembrane segment at 6 to 26 (IVLLIIFSTSLLFLWDAWVKE) threads the bilayer. Positions 47–87 (TQSKNNDGLPIPGSELTASQTGSDLNGIPSSGDTADSVTPR) are disordered. Residues 62–83 (LTASQTGSDLNGIPSSGDTADS) show a composition bias toward polar residues. 3 helical membrane passes run 381–401 (WGIAIILLTITVKLLFFPLSA), 451–471 (FPILVQIPVFIALYWTILAAV), and 525–545 (PVAFSAIFFFFPAGLVLYSLV). Residues 563 to 622 (TAPSQDAPESPASKDAPELPVSNQVINDSENTEAPASGPADSPKKPVNIPRRMHKRTRKK) form a disordered region. Residues 583 to 596 (VSNQVINDSENTEA) show a composition bias toward polar residues. Residues 613 to 622 (RRMHKRTRKK) show a composition bias toward basic residues.

This sequence belongs to the OXA1/ALB3/YidC family. Type 1 subfamily. Interacts with the Sec translocase complex via SecD. Specifically interacts with transmembrane segments of nascent integral membrane proteins during membrane integration.

The protein localises to the cell inner membrane. In terms of biological role, required for the insertion and/or proper folding and/or complex formation of integral membrane proteins into the membrane. Involved in integration of membrane proteins that insert both dependently and independently of the Sec translocase complex, as well as at least some lipoproteins. Aids folding of multispanning membrane proteins. The protein is Membrane protein insertase YidC of Nitrosomonas eutropha (strain DSM 101675 / C91 / Nm57).